We begin with the raw amino-acid sequence, 251 residues long: Hydroxyacylglutathione hydrolase (251 aa).

Zn(2+)-binding residues include H53, H55, D57, H58, H110, D127, and H165.

The protein belongs to the metallo-beta-lactamase superfamily. Glyoxalase II family. As to quaternary structure, monomer. The cofactor is Zn(2+).

It catalyses the reaction an S-(2-hydroxyacyl)glutathione + H2O = a 2-hydroxy carboxylate + glutathione + H(+). It participates in secondary metabolite metabolism; methylglyoxal degradation; (R)-lactate from methylglyoxal: step 2/2. Functionally, thiolesterase that catalyzes the hydrolysis of S-D-lactoyl-glutathione to form glutathione and D-lactic acid. In Salmonella paratyphi C (strain RKS4594), this protein is Hydroxyacylglutathione hydrolase.